A 157-amino-acid chain; its full sequence is Regulatory protein RecX (157 aa).

Belongs to the RecX family.

It localises to the cytoplasm. Its function is as follows. Modulates RecA activity. This Leptothrix cholodnii (strain ATCC 51168 / LMG 8142 / SP-6) (Leptothrix discophora (strain SP-6)) protein is Regulatory protein RecX.